The sequence spans 270 residues: Palmitoyltransferase ZDHHC12-A (270 aa).

Residues 1–8 lie on the Cytoplasmic side of the membrane; sequence MNKSLFKS. A helical transmembrane segment spans residues 9–29; it reads GCLVRTAHVILTWIITLILFL. The Lumenal segment spans residues 30–45; the sequence is HNTDLRRCQERGDLLQ. A helical transmembrane segment spans residues 46–66; it reads PLVFSSVLLLSVLLYFTVSLM. Residues 67–145 are Cytoplasmic-facing; it reads DPGFVLSDSQ…DNCVGELNHR (79 aa). The DHHC domain occupies 102–152; sequence RRCGYCFLLQPMRARHCKWCKRCVRRFDHHCPWIDNCVGELNHRWFLLYLC. Catalysis depends on C132, which acts as the S-palmitoyl cysteine intermediate. Residues 146-166 form a helical membrane-spanning segment; that stretch reads WFLLYLCVQFTAVCWGLQSAW. Over 167 to 182 the chain is Lumenal; sequence SGFISAPSWQQWFTQN. A helical transmembrane segment spans residues 183 to 203; it reads VFLLVAFAVTAVFSVVLLLLL. Residues 204–270 lie on the Cytoplasmic side of the membrane; it reads CIHAYLASVN…MYIRHNNASV (67 aa).

It belongs to the DHHC palmitoyltransferase family.

Its subcellular location is the golgi apparatus membrane. The protein localises to the endoplasmic reticulum membrane. The enzyme catalyses L-cysteinyl-[protein] + hexadecanoyl-CoA = S-hexadecanoyl-L-cysteinyl-[protein] + CoA. Functionally, palmitoyltransferase that catalyzes the addition of palmitate onto various protein substrates. Has a palmitoyltransferase activity toward gephyrin/GPHN, regulating its clustering at synapses and its function in gamma-aminobutyric acid receptor clustering. Acts as an inhibitor of the NLRP3 inflammasome by mediating palmitoylation of NLRP3, thereby promoting NLRP3 degradation by the chaperone-mediated autophagy (CMA) process. In Danio rerio (Zebrafish), this protein is Palmitoyltransferase ZDHHC12-A.